Consider the following 599-residue polypeptide: Proline--tRNA ligase (599 aa).

The protein belongs to the class-II aminoacyl-tRNA synthetase family. ProS type 1 subfamily. As to quaternary structure, homodimer.

It localises to the cytoplasm. It carries out the reaction tRNA(Pro) + L-proline + ATP = L-prolyl-tRNA(Pro) + AMP + diphosphate. In terms of biological role, catalyzes the attachment of proline to tRNA(Pro) in a two-step reaction: proline is first activated by ATP to form Pro-AMP and then transferred to the acceptor end of tRNA(Pro). As ProRS can inadvertently accommodate and process non-cognate amino acids such as alanine and cysteine, to avoid such errors it has two additional distinct editing activities against alanine. One activity is designated as 'pretransfer' editing and involves the tRNA(Pro)-independent hydrolysis of activated Ala-AMP. The other activity is designated 'posttransfer' editing and involves deacylation of mischarged Ala-tRNA(Pro). The misacylated Cys-tRNA(Pro) is not edited by ProRS. This is Proline--tRNA ligase from Prochlorococcus marinus (strain MIT 9313).